Consider the following 84-residue polypeptide: Small ribosomal subunit protein bS18 (84 aa).

The protein belongs to the bacterial ribosomal protein bS18 family. Part of the 30S ribosomal subunit. Forms a tight heterodimer with protein bS6.

Its function is as follows. Binds as a heterodimer with protein bS6 to the central domain of the 16S rRNA, where it helps stabilize the platform of the 30S subunit. The sequence is that of Small ribosomal subunit protein bS18 from Clostridium kluyveri (strain NBRC 12016).